Here is a 246-residue protein sequence, read N- to C-terminus: Orotidine 5'-phosphate decarboxylase (246 aa).

Residues Asp22, Lys44, Asp71–Thr80, Thr130, Arg191, Gln201, Gly221, and Arg222 each bind substrate. The active-site Proton donor is the Lys73.

This sequence belongs to the OMP decarboxylase family. Type 1 subfamily. In terms of assembly, homodimer.

It catalyses the reaction orotidine 5'-phosphate + H(+) = UMP + CO2. It functions in the pathway pyrimidine metabolism; UMP biosynthesis via de novo pathway; UMP from orotate: step 2/2. Catalyzes the decarboxylation of orotidine 5'-monophosphate (OMP) to uridine 5'-monophosphate (UMP). This Neisseria meningitidis serogroup A / serotype 4A (strain DSM 15465 / Z2491) protein is Orotidine 5'-phosphate decarboxylase.